We begin with the raw amino-acid sequence, 455 residues long: D-arabinitol 4-dehydrogenase (455 aa).

This sequence belongs to the mannitol dehydrogenase family. As to quaternary structure, monomer.

It catalyses the reaction D-arabinitol + NAD(+) = D-xylulose + NADH + H(+). Its pathway is carbohydrate metabolism; D-arabinitol metabolism. In Klebsiella pneumoniae, this protein is D-arabinitol 4-dehydrogenase (dalD).